The following is a 356-amino-acid chain: Protein HEXIM1 (356 aa).

2 stretches are compositionally biased toward basic and acidic residues: residues 1–11 (MAEPLLTEHQH) and 24–47 (VHEEHTSERPPSAEERVPKEDSRW). Residues 1–162 (MAEPLLTEHQ…RPSKKKRHWK (162 aa)) form a disordered region. Polar residues predominate over residues 48 to 58 (QSRASLQSGSR). A compositionally biased stretch (basic and acidic residues) spans 84–93 (SLEKGEKGQN). A phosphoserine mark is found at serine 98 and serine 103. Residues 145-162 (LGKKKHRRRPSKKKRHWK) show a composition bias toward basic residues. Residues 147 to 174 (KKKHRRRPSKKKRHWKPYYKLTWEEKKK) form a basic region; mediates nuclear localization and interaction with 7SK snRNA and NR3C1 region. The interval 199 to 202 (PYNT) is interaction with P-TEFb. The segment at 207-247 (MDDHDQEEPDLKTGLYPKRAAAKSDDTSDEDFVEEAGEEDG) is autoinhibitory acidic region; in absence of 7SK snRNA interacts with the basic region preventing interaction with P-TEFb and modulating subcellular localization. The segment at 210 to 259 (HDQEEPDLKTGLYPKRAAAKSDDTSDEDFVEEAGEEDGGSDGMGGDGSEF) is disordered. At serine 230 the chain carries Phosphoserine. Phosphothreonine is present on threonine 233. Positions 233–248 (TSDEDFVEEAGEEDGG) are enriched in acidic residues. 3 positions are modified to phosphoserine: serine 234, serine 249, and serine 257. Residues 280–346 (SKQELIKEYL…LTENELHRQQ (67 aa)) are a coiled coil. Residues 283–311 (ELIKEYLELEKCLSRKEDENNRLRLESKR) form a mediates interaction with CCNT1 region. The required for inhibition of ESR1-dependent transcription stretch occupies residues 307–352 (LESKRLGGVDARVRELELELDRLRAENLQLLTENELHRQQERAPLS).

It belongs to the HEXIM family. Homooligomer and heterooligomer with HEXIM2; probably dimeric. Core component of the 7SK RNP complex, at least composed of 7SK RNA, LARP7, MEPCE, HEXIM1 (or HEXIM2) and P-TEFb (composed of CDK9 and CCNT1/cyclin-T1). Interacts with the N-CoR complex through NCOR1. Interacts with ESR1 and NR3C1. May interact with NF-kappa-B through RELA. Interacts with CCNT2; mediates formation of a tripartite complex with KPNA2. Part of the HDP-RNP complex composed of at least HEXIM1, PRKDC, XRCC5, XRCC6, paraspeckle proteins (SFPQ, NONO, PSPC1, RBM14, and MATR3) and NEAT1 non-coding RNA. Widely expressed with higher expression in heart, skeletal muscle and brain (at protein level).

The protein resides in the nucleus. Its subcellular location is the cytoplasm. Functionally, transcriptional regulator which functions as a general RNA polymerase II transcription inhibitor. Core component of the 7SK RNP complex: in cooperation with 7SK snRNA sequesters P-TEFb in a large inactive 7SK snRNP complex preventing RNA polymerase II phosphorylation and subsequent transcriptional elongation. May also regulate NF-kappa-B, ESR1, NR3C1 and CIITA-dependent transcriptional activity. Plays a role in the regulation of DNA virus-mediated innate immune response by assembling into the HDP-RNP complex, a complex that serves as a platform for IRF3 phosphorylation and subsequent innate immune response activation through the cGAS-STING pathway. This chain is Protein HEXIM1 (Hexim1), found in Mus musculus (Mouse).